The chain runs to 137 residues: Small ribosomal subunit protein eS17 (137 aa).

It belongs to the eukaryotic ribosomal protein eS17 family. In terms of assembly, component of the small ribosomal subunit. Mature ribosomes consist of a small (40S) and a large (60S) subunit. The 40S subunit contains about 32 different proteins and 1 molecule of RNA (18S). The 60S subunit contains 45 different proteins and 3 molecules of RNA (25S, 5.8S and 5S).

It localises to the cytoplasm. Its function is as follows. Component of the ribosome, a large ribonucleoprotein complex responsible for the synthesis of proteins in the cell. The small ribosomal subunit (SSU) binds messenger RNAs (mRNAs) and translates the encoded message by selecting cognate aminoacyl-transfer RNA (tRNA) molecules. The large subunit (LSU) contains the ribosomal catalytic site termed the peptidyl transferase center (PTC), which catalyzes the formation of peptide bonds, thereby polymerizing the amino acids delivered by tRNAs into a polypeptide chain. The nascent polypeptides leave the ribosome through a tunnel in the LSU and interact with protein factors that function in enzymatic processing, targeting, and the membrane insertion of nascent chains at the exit of the ribosomal tunnel. This is Small ribosomal subunit protein eS17 (RPS17B) from Candida albicans (strain SC5314 / ATCC MYA-2876) (Yeast).